The chain runs to 203 residues: Glycerol-3-phosphate acyltransferase (203 aa).

Helical transmembrane passes span 10 to 30 (LLALVGLAAYLLGAIPFGLLI), 59 to 79 (PAAAATLILDAGKGAFAVILA), 87 to 107 (AAQIAGAAAFLGHCFPVYLKF), 116 to 136 (FFGTVIALSWPLGLAAGAIWL), and 168 to 188 (LVVLSLFLGFLIWIRHRENII).

The protein belongs to the PlsY family. In terms of assembly, probably interacts with PlsX.

It is found in the cell inner membrane. It carries out the reaction an acyl phosphate + sn-glycerol 3-phosphate = a 1-acyl-sn-glycero-3-phosphate + phosphate. The protein operates within lipid metabolism; phospholipid metabolism. Its function is as follows. Catalyzes the transfer of an acyl group from acyl-phosphate (acyl-PO(4)) to glycerol-3-phosphate (G3P) to form lysophosphatidic acid (LPA). This enzyme utilizes acyl-phosphate as fatty acyl donor, but not acyl-CoA or acyl-ACP. The protein is Glycerol-3-phosphate acyltransferase of Dinoroseobacter shibae (strain DSM 16493 / NCIMB 14021 / DFL 12).